We begin with the raw amino-acid sequence, 199 residues long: Cytochrome c-type cyt cy (199 aa).

The chain crosses the membrane as a helical span at residues 7–27 (ITKIGVTLFAVALFYGFIYML). Positions 69–80 (AAETAEAAAPAE) are enriched in low complexity. The segment at 69-93 (AAETAEAAAPAEPAAPPPPAYVEVD) is disordered. Heme c contacts are provided by cysteine 112, cysteine 115, histidine 116, and methionine 148.

Post-translationally, binds 1 heme c group covalently per subunit.

It localises to the cell membrane. Its function is as follows. Electron transfer pathways that operates during photosynthesis. The protein is Cytochrome c-type cyt cy (cycY) of Rhodobacter capsulatus (strain ATCC BAA-309 / NBRC 16581 / SB1003).